The sequence spans 235 residues: Octanoyltransferase (235 aa).

In terms of domain architecture, BPL/LPL catalytic spans 52–229 (KNRQASMIFC…SICSALEYIN (178 aa)). Substrate-binding positions include 89-96 (RGGKITWH), 159-161 (AIG), and 172-174 (GFA). The active-site Acyl-thioester intermediate is Cys190.

The protein belongs to the LipB family.

It is found in the cytoplasm. It carries out the reaction octanoyl-[ACP] + L-lysyl-[protein] = N(6)-octanoyl-L-lysyl-[protein] + holo-[ACP] + H(+). The protein operates within protein modification; protein lipoylation via endogenous pathway; protein N(6)-(lipoyl)lysine from octanoyl-[acyl-carrier-protein]: step 1/2. Functionally, catalyzes the transfer of endogenously produced octanoic acid from octanoyl-acyl-carrier-protein onto the lipoyl domains of lipoate-dependent enzymes. Lipoyl-ACP can also act as a substrate although octanoyl-ACP is likely to be the physiological substrate. This chain is Octanoyltransferase, found in Tropheryma whipplei (strain Twist) (Whipple's bacillus).